The following is a 267-amino-acid chain: 1-(5-phosphoribosyl)-5-[(5-phosphoribosylamino)methylideneamino] imidazole-4-carboxamide isomerase (267 aa).

Belongs to the HisA/HisF family.

It localises to the cytoplasm. The enzyme catalyses 1-(5-phospho-beta-D-ribosyl)-5-[(5-phospho-beta-D-ribosylamino)methylideneamino]imidazole-4-carboxamide = 5-[(5-phospho-1-deoxy-D-ribulos-1-ylimino)methylamino]-1-(5-phospho-beta-D-ribosyl)imidazole-4-carboxamide. It participates in amino-acid biosynthesis; L-histidine biosynthesis; L-histidine from 5-phospho-alpha-D-ribose 1-diphosphate: step 4/9. This Kluyveromyces lactis (strain ATCC 8585 / CBS 2359 / DSM 70799 / NBRC 1267 / NRRL Y-1140 / WM37) (Yeast) protein is 1-(5-phosphoribosyl)-5-[(5-phosphoribosylamino)methylideneamino] imidazole-4-carboxamide isomerase (HIS6).